Consider the following 739-residue polypeptide: Putative apoptosis-inducing factor 1, mitochondrial (739 aa).

The transit peptide at 1–42 directs the protein to the mitochondrion; the sequence is MSIWGVRCLTQRFIRQAYILANRRLLGPVPQRSPPAYAPLRP. Positions 257–564 are FAD-dependent oxidoreductase; that stretch reads YLIIGGGTAA…ARRNLYVAGD (308 aa). FAD is bound by residues 261-265, Arg295, Lys300, Val358, Arg410, Asp564, and 580-581; these read GGGTA and HH. The segment at 644 to 681 is disordered; it reads VDQLSESSDSDVPETSTSSSQSSKSDAGASQDGVTCDP. Residues 656–676 are compositionally biased toward low complexity; it reads PETSTSSSQSSKSDAGASQDG.

The protein belongs to the FAD-dependent oxidoreductase family. It depends on FAD as a cofactor.

Its subcellular location is the mitochondrion intermembrane space. The enzyme catalyses A + NADH + H(+) = AH2 + NAD(+). Functionally, probable NADH oxidoreductase. Mitochondrial effector of cell death that plays roles in developmentally regulated cell death and normal mitochondrial function. The sequence is that of Putative apoptosis-inducing factor 1, mitochondrial (AIF) from Drosophila melanogaster (Fruit fly).